The chain runs to 143 residues: Transcriptional regulator MraZ (143 aa).

2 SpoVT-AbrB domains span residues 5-47 and 76-119; these read TYTP…PREE and TDEQ…DAQA.

The protein belongs to the MraZ family. Forms oligomers.

The protein localises to the cytoplasm. The protein resides in the nucleoid. This is Transcriptional regulator MraZ from Rhodococcus opacus (strain B4).